The primary structure comprises 354 residues: UDP-3-O-acylglucosamine N-acyltransferase (354 aa).

Residue H258 is the Proton acceptor of the active site.

The protein belongs to the transferase hexapeptide repeat family. LpxD subfamily. Homotrimer.

It catalyses the reaction a UDP-3-O-[(3R)-3-hydroxyacyl]-alpha-D-glucosamine + a (3R)-hydroxyacyl-[ACP] = a UDP-2-N,3-O-bis[(3R)-3-hydroxyacyl]-alpha-D-glucosamine + holo-[ACP] + H(+). The protein operates within bacterial outer membrane biogenesis; LPS lipid A biosynthesis. Functionally, catalyzes the N-acylation of UDP-3-O-acylglucosamine using 3-hydroxyacyl-ACP as the acyl donor. Is involved in the biosynthesis of lipid A, a phosphorylated glycolipid that anchors the lipopolysaccharide to the outer membrane of the cell. The chain is UDP-3-O-acylglucosamine N-acyltransferase from Sinorhizobium fredii (strain NBRC 101917 / NGR234).